Reading from the N-terminus, the 206-residue chain is Large ribosomal subunit protein uL4 (206 aa).

A disordered region spans residues 63–93 (MYKQKGTGRARHHSARAPQFRGGGKAHGPVV). Basic residues predominate over residues 64–77 (YKQKGTGRARHHSA).

The protein belongs to the universal ribosomal protein uL4 family. In terms of assembly, part of the 50S ribosomal subunit.

One of the primary rRNA binding proteins, this protein initially binds near the 5'-end of the 23S rRNA. It is important during the early stages of 50S assembly. It makes multiple contacts with different domains of the 23S rRNA in the assembled 50S subunit and ribosome. Its function is as follows. Forms part of the polypeptide exit tunnel. This chain is Large ribosomal subunit protein uL4, found in Sinorhizobium medicae (strain WSM419) (Ensifer medicae).